The primary structure comprises 209 residues: CASP-like protein 2A2 (209 aa).

Topologically, residues 1–37 (MSKTAGVGRLGGARAADAAQQQQLAAGDAAVARAARP) are cytoplasmic. A helical membrane pass occupies residues 38–58 (IETLLRAAPLVLCVAAMTLML). The Extracellular portion of the chain corresponds to 59 to 79 (RDQQSNEYGTVAYSDLGGFKY). Residues 80 to 100 (LVYANGLCAAYSLASAFYTAV) form a helical membrane-spanning segment. At 101–109 (PRPATVSRS) the chain is on the cytoplasmic side. The chain crosses the membrane as a helical span at residues 110 to 130 (WVVFLLDQVFTYLILAAGAAA). Residues 131–161 (AELLYLAYNGDKEVTWSEACGVFGSFCRQAR) are Extracellular-facing. A helical transmembrane segment spans residues 162 to 182 (ISVAITFGAVLCFILLSLLSS). The Cytoplasmic segment spans residues 183–209 (YRLFSAYEAPPPSALGSKGVEIAAYPR).

Belongs to the Casparian strip membrane proteins (CASP) family. In terms of assembly, homodimer and heterodimers.

It is found in the cell membrane. This Zea mays (Maize) protein is CASP-like protein 2A2.